Here is a 362-residue protein sequence, read N- to C-terminus: Protein RecA (362 aa).

77–84 (GPESSGKT) is an ATP binding site.

The protein belongs to the RecA family.

It is found in the cytoplasm. In terms of biological role, can catalyze the hydrolysis of ATP in the presence of single-stranded DNA, the ATP-dependent uptake of single-stranded DNA by duplex DNA, and the ATP-dependent hybridization of homologous single-stranded DNAs. It interacts with LexA causing its activation and leading to its autocatalytic cleavage. This is Protein RecA from Allorhizobium ampelinum (strain ATCC BAA-846 / DSM 112012 / S4) (Agrobacterium vitis (strain S4)).